The following is a 517-amino-acid chain: Endoglucanase A (517 aa).

Positions 1-25 (MKRSLLKTCSIIAGATIIFSSLSIS) are cleaved as a signal peptide. The active-site Proton donor is the Glu185. The active-site Nucleophile is the Glu309. Over residues 382–392 (HPEATEDDKPS) the composition is skewed to basic and acidic residues. The segment at 382-424 (HPEATEDDKPSTDVTNPDSGNTKPDSGNTNPGTETTTPTDNEK) is disordered. The segment covering 393 to 407 (TDVTNPDSGNTKPDS) has biased composition (polar residues). The segment covering 408 to 420 (GNTNPGTETTTPT) has biased composition (low complexity). The region spanning 416 to 517 (TTTPTDNEKI…VISNFEYKFD (102 aa)) is the CBM2 domain.

Belongs to the glycosyl hydrolase 5 (cellulase A) family.

It carries out the reaction Endohydrolysis of (1-&gt;4)-beta-D-glucosidic linkages in cellulose, lichenin and cereal beta-D-glucans.. In terms of biological role, hydrolyzes barley beta-glucan, lichenan, carboxymethylcellulose and xylan. It shows preferential activity against the larger cellooligosaccharides (cellohexaose and cellopentaose); cellotetraose is the smallest substrate degraded completely. In Clostridium longisporum, this protein is Endoglucanase A (celA).